The primary structure comprises 475 residues: Ankyrin repeat, SAM and basic leucine zipper domain-containing protein 1 (475 aa).

The tract at residues 1–25 (MAASALRGLPVAGGGESSESEDDGW) is disordered. Residues S17, S18, and S20 each carry the phosphoserine modification. 6 ANK repeats span residues 45–74 (EKKE…SVDS), 78–107 (YGWT…NASF), 110–144 (DKQS…DPNV), 148–177 (RLMT…EVNT), 181–210 (NGYT…NKML), and 214–243 (DGKM…PLEG). One can recognise an SAM domain in the interval 272-334 (SYTAFGDLEV…KILAALKELQ (63 aa)).

Interacts with DDX4, PIWIL1, RANBP9 and TDRD1.

It is found in the cytoplasm. Functionally, plays a central role during spermatogenesis by repressing transposable elements and preventing their mobilization, which is essential for the germline integrity. Acts via the piRNA metabolic process, which mediates the repression of transposable elements during meiosis by forming complexes composed of piRNAs and Piwi proteins and governs the methylation and subsequent repression of transposons. Its association with pi-bodies suggests a participation in the primary piRNAs metabolic process. Required prior to the pachytene stage to facilitate the production of multiple types of piRNAs, including those associated with repeats involved in the regulation of retrotransposons. May act by mediating protein-protein interactions during germ cell maturation. This Pan troglodytes (Chimpanzee) protein is Ankyrin repeat, SAM and basic leucine zipper domain-containing protein 1 (ASZ1).